The chain runs to 290 residues: Protein EURL homolog (290 aa).

Residues 185-206 form a disordered region; it reads SHSQAQKTEETSSGPEGTIQTQ. Residues 228–251 adopt a coiled-coil conformation; that stretch reads AKLQQRIQEVFEELTHQVQEKDSL.

Belongs to the EURL family. In terms of assembly, interacts with CCDC85B. As to expression, expressed in brain (at protein level). Expressed in neural progenitor cells and postmitotic neurons of the embryonic cerebral cortex.

Functionally, plays a role in cortical progenitor cell proliferation and differentiation. Promotes dendritic spine development of post-migratory cortical projection neurons by modulating the beta-catenin signaling pathway. This is Protein EURL homolog from Mus musculus (Mouse).